A 956-amino-acid polypeptide reads, in one-letter code: UvrABC system protein A (956 aa).

33 to 40 (GLSGSGKS) contributes to the ATP binding site. The C4-type zinc finger occupies 252 to 279 (CPYCGFSVGELEPRMFSFNSPFGACPTC). ABC transporter domains are found at residues 309–587 (WRPI…KNSI) and 607–936 (GNGL…KYLK). 639–646 (GVSGSGKS) is a binding site for ATP. Residues 738–764 (CEACKGDGIIKIEMHFLPDVYVPCEVC) form a C4-type zinc finger.

Belongs to the ABC transporter superfamily. UvrA family. As to quaternary structure, forms a heterotetramer with UvrB during the search for lesions.

It is found in the cytoplasm. Functionally, the UvrABC repair system catalyzes the recognition and processing of DNA lesions. UvrA is an ATPase and a DNA-binding protein. A damage recognition complex composed of 2 UvrA and 2 UvrB subunits scans DNA for abnormalities. When the presence of a lesion has been verified by UvrB, the UvrA molecules dissociate. The chain is UvrABC system protein A from Listeria innocua serovar 6a (strain ATCC BAA-680 / CLIP 11262).